We begin with the raw amino-acid sequence, 108 residues long: Phosphoribosyl-ATP pyrophosphatase (108 aa).

Belongs to the PRA-PH family.

It localises to the cytoplasm. The enzyme catalyses 1-(5-phospho-beta-D-ribosyl)-ATP + H2O = 1-(5-phospho-beta-D-ribosyl)-5'-AMP + diphosphate + H(+). It participates in amino-acid biosynthesis; L-histidine biosynthesis; L-histidine from 5-phospho-alpha-D-ribose 1-diphosphate: step 2/9. The polypeptide is Phosphoribosyl-ATP pyrophosphatase (Trichlorobacter lovleyi (strain ATCC BAA-1151 / DSM 17278 / SZ) (Geobacter lovleyi)).